A 245-amino-acid polypeptide reads, in one-letter code: Transmembrane protein 69 (245 aa).

5 consecutive transmembrane segments (helical) span residues 97–117 (ALYITLAGLIPFTAPPLLMVI), 122–142 (IPVLAFTQMAYGAGFLAFLGG), 159–179 (YINLASSMSPILFSWAAILFS), 185–205 (AIVTLIIGLGIALHNELFLLP), and 216–236 (IVSTLVAFISFVVTLILENIY).

The protein localises to the membrane. The protein is Transmembrane protein 69 (Tmem69) of Mus musculus (Mouse).